We begin with the raw amino-acid sequence, 138 residues long: Large ribosomal subunit protein uL16 (138 aa).

A compositionally biased stretch (basic residues) spans 1–13 (MLQPSRRKYRKEQ). A disordered region spans residues 1–20 (MLQPSRRKYRKEQKGRNTGL).

It belongs to the universal ribosomal protein uL16 family. Part of the 50S ribosomal subunit.

Binds 23S rRNA and is also seen to make contacts with the A and possibly P site tRNAs. This chain is Large ribosomal subunit protein uL16, found in Bordetella avium (strain 197N).